Reading from the N-terminus, the 483-residue chain is Zinc metalloproteinase/disintegrin (483 aa).

The N-terminal stretch at 1 to 20 is a signal peptide; the sequence is MIQVLLVTLCLAAFPYQGNS. A propeptide spanning residues 21–191 is cleaved from the precursor; sequence IILESGNVND…KASQLNLTPE (171 aa). The region spanning 198–394 is the Peptidase M12B domain; the sequence is RYIELVVVAD…HNPQCMLNEP (197 aa). Positions 201 and 285 each coordinate Ca(2+). 3 disulfide bridges follow: Cys-309–Cys-389, Cys-349–Cys-373, and Cys-351–Cys-356. His-334 is a Zn(2+) binding site. Glu-335 is an active-site residue. His-338 and His-344 together coordinate Zn(2+). Positions 389 and 392 each coordinate Ca(2+). Positions 395–414 are excised as a propeptide; sequence LRTDIVSTPVSGNELWETGE. Residues 402–483 enclose the Disintegrin domain; the sequence is TPVSGNELWE…AGCPRNPFHA (82 aa). 4 disulfides stabilise this stretch: Cys-425–Cys-448, Cys-439–Cys-445, Cys-444–Cys-469, and Cys-457–Cys-476. The short motif at 461-463 is the Cell attachment site; atypical (KGD) element; it reads KGD.

The protein belongs to the venom metalloproteinase (M12B) family. P-II subfamily. P-IIe sub-subfamily. As to quaternary structure, heterodimer with piscivostatin-alpha; disulfide-linked (disintegrin). It depends on Zn(2+) as a cofactor. In terms of tissue distribution, expressed by the venom gland.

It is found in the secreted. Functionally, impairs hemostasis in the envenomed animal. Inhibits platelet aggregation induced by ADP. Acts by inhibiting fibrinogen interaction with platelet receptors GPIIb/GPIIIa (ITGA2B/ITGB3). Also inhibits platelet aggregate dissociation in human platelet-rich plasma. The sequence is that of Zinc metalloproteinase/disintegrin from Agkistrodon piscivorus piscivorus (Eastern cottonmouth).